Here is a 285-residue protein sequence, read N- to C-terminus: Sulfoquinovosyl glycerol transport system permease protein SmoH (285 aa).

The next 6 helical transmembrane spans lie at Phe21 to Thr41, Phe83 to Ala103, Ile115 to Phe135, Leu150 to Phe170, Val195 to Ala215, and Pro250 to Phe270. The 192-residue stretch at Leu79–Phe270 folds into the ABC transmembrane type-1 domain.

This sequence belongs to the binding-protein-dependent transport system permease family. In terms of assembly, the complex is probably composed of two ATP-binding proteins (SmoE), two transmembrane proteins (SmoG and SmoH) and a solute-binding protein (SmoF).

It is found in the cell inner membrane. Its function is as follows. Part of the ABC transporter complex SmoEFGH involved in sulfoquinovosyl glycerol (SQGro) uptake. Responsible for the translocation of the substrate across the membrane. This is Sulfoquinovosyl glycerol transport system permease protein SmoH from Agrobacterium fabrum (strain C58 / ATCC 33970) (Agrobacterium tumefaciens (strain C58)).